A 124-amino-acid polypeptide reads, in one-letter code: Large ribosomal subunit protein bL17 (124 aa).

It belongs to the bacterial ribosomal protein bL17 family. In terms of assembly, part of the 50S ribosomal subunit. Contacts protein L32.

The protein is Large ribosomal subunit protein bL17 of Borrelia turicatae (strain 91E135).